A 384-amino-acid chain; its full sequence is Succinyl-diaminopimelate desuccinylase (384 aa).

H75 is a Zn(2+) binding site. D77 is a catalytic residue. Residue D108 coordinates Zn(2+). Catalysis depends on E142, which acts as the Proton acceptor. Positions 143, 171, and 357 each coordinate Zn(2+).

It belongs to the peptidase M20A family. DapE subfamily. As to quaternary structure, homodimer. Requires Zn(2+) as cofactor. Co(2+) serves as cofactor.

The catalysed reaction is N-succinyl-(2S,6S)-2,6-diaminopimelate + H2O = (2S,6S)-2,6-diaminopimelate + succinate. Its pathway is amino-acid biosynthesis; L-lysine biosynthesis via DAP pathway; LL-2,6-diaminopimelate from (S)-tetrahydrodipicolinate (succinylase route): step 3/3. In terms of biological role, catalyzes the hydrolysis of N-succinyl-L,L-diaminopimelic acid (SDAP), forming succinate and LL-2,6-diaminopimelate (DAP), an intermediate involved in the bacterial biosynthesis of lysine and meso-diaminopimelic acid, an essential component of bacterial cell walls. In Shewanella oneidensis (strain ATCC 700550 / JCM 31522 / CIP 106686 / LMG 19005 / NCIMB 14063 / MR-1), this protein is Succinyl-diaminopimelate desuccinylase.